The primary structure comprises 491 residues: G2/mitotic-specific cyclin-A (491 aa).

A disordered region spans residues 1–21; the sequence is MASFQIHQDMSNKENPGIKIP. The Cyclin N-terminal domain occupies 206–332; it reads DILEYFRESE…ILKILSFDLC (127 aa).

It belongs to the cyclin family. Cyclin AB subfamily. In terms of assembly, component of the Frs-CycA-Cdk1 complex composed of CycA, Cdk1 and Z600. Interacts (via C-terminus) with Z600. Interacts with otu and (via C-terminus) with bam; the interaction stabilizes CycA by negatively regulating its ubiquitination. Post-translationally, ubiquitinated. Ubiquitination state is negatively regulated by a deubiquitinase complex made up of bam and otu.

Essential for the control of the cell cycle at the G2/M (mitosis) transition. Interacts with the Cdk1 and Cdk2 protein kinases to form MPF. G2/M cyclins accumulate steadily during G2 and are abruptly destroyed at mitosis. This is G2/mitotic-specific cyclin-A (CycA) from Drosophila melanogaster (Fruit fly).